We begin with the raw amino-acid sequence, 788 residues long: Ciliated left-right organizer metallopeptidase (788 aa).

An N-terminal signal peptide occupies residues 1-20 (MLLLLLLLLLLPPLVLRVAA). The Extracellular segment spans residues 21–735 (SRCLHDETQK…DHNPSMTHLR (715 aa)). Residues 40–56 (SQLPSKSRSSSLTLPSS) show a composition bias toward low complexity. Positions 40–59 (SQLPSKSRSSSLTLPSSRDP) are disordered. Zn(2+) is bound at residue H305. E306 is an active-site residue. H309 serves as a coordination point for Zn(2+). A glycan (N-linked (GlcNAc...) asparagine) is linked at N333. Residue H385 participates in Zn(2+) binding. N-linked (GlcNAc...) asparagine glycans are attached at residues N425, N491, N524, and N713. A helical membrane pass occupies residues 736–756 (LSMGLCLMLLILVGVMGTTAY). At 757 to 788 (QKRATLPVRPSASYHSPELHSTRVPVRGIREV) the chain is on the cytoplasmic side. Positions 767 to 788 (SASYHSPELHSTRVPVRGIREV) are disordered.

This sequence belongs to the peptidase M8 family. It depends on Zn(2+) as a cofactor.

Its subcellular location is the membrane. In terms of biological role, putative metalloproteinase that plays a role in left-right patterning process. This chain is Ciliated left-right organizer metallopeptidase, found in Homo sapiens (Human).